A 429-amino-acid chain; its full sequence is 3-phosphoshikimate 1-carboxyvinyltransferase (429 aa).

3-phosphoshikimate is bound by residues Lys-11, Ser-12, and Arg-16. Phosphoenolpyruvate is bound at residue Lys-11. Gly-82 and Arg-110 together coordinate phosphoenolpyruvate. Positions 155, 157, 302, and 329 each coordinate 3-phosphoshikimate. Gln-157 provides a ligand contact to phosphoenolpyruvate. The active-site Proton acceptor is Asp-302. Positions 333 and 385 each coordinate phosphoenolpyruvate.

This sequence belongs to the EPSP synthase family. Monomer.

It is found in the cytoplasm. The enzyme catalyses 3-phosphoshikimate + phosphoenolpyruvate = 5-O-(1-carboxyvinyl)-3-phosphoshikimate + phosphate. It participates in metabolic intermediate biosynthesis; chorismate biosynthesis; chorismate from D-erythrose 4-phosphate and phosphoenolpyruvate: step 6/7. Its function is as follows. Catalyzes the transfer of the enolpyruvyl moiety of phosphoenolpyruvate (PEP) to the 5-hydroxyl of shikimate-3-phosphate (S3P) to produce enolpyruvyl shikimate-3-phosphate and inorganic phosphate. The polypeptide is 3-phosphoshikimate 1-carboxyvinyltransferase (Helicobacter pylori (strain ATCC 700392 / 26695) (Campylobacter pylori)).